The following is a 205-amino-acid chain: Transcriptional regulator GfcR (205 aa).

This sequence belongs to the purine/pyrimidine phosphoribosyltransferase family. GfcR subfamily.

This Methanococcus vannielii (strain ATCC 35089 / DSM 1224 / JCM 13029 / OCM 148 / SB) protein is Transcriptional regulator GfcR.